We begin with the raw amino-acid sequence, 466 residues long: UDP-N-acetylmuramate--L-alanine ligase (466 aa).

114–120 (GTHGKTT) serves as a coordination point for ATP.

The protein belongs to the MurCDEF family.

The protein resides in the cytoplasm. It carries out the reaction UDP-N-acetyl-alpha-D-muramate + L-alanine + ATP = UDP-N-acetyl-alpha-D-muramoyl-L-alanine + ADP + phosphate + H(+). The protein operates within cell wall biogenesis; peptidoglycan biosynthesis. Its function is as follows. Cell wall formation. This is UDP-N-acetylmuramate--L-alanine ligase from Chlorobium phaeobacteroides (strain DSM 266 / SMG 266 / 2430).